The following is a 391-amino-acid chain: Polysialic acid biosynthesis protein P7 (391 aa).

Its function is as follows. May be involved in the synthesis of polysialic acid (PSA). In Escherichia coli, this protein is Polysialic acid biosynthesis protein P7 (neuC).